A 434-amino-acid chain; its full sequence is Enolase (434 aa).

Residue Q163 coordinates (2R)-2-phosphoglycerate. E205 (proton donor) is an active-site residue. 3 residues coordinate Mg(2+): D242, E291, and D318. Residues K343, R372, S373, and K394 each contribute to the (2R)-2-phosphoglycerate site. K343 serves as the catalytic Proton acceptor.

It belongs to the enolase family. Mg(2+) serves as cofactor.

It is found in the cytoplasm. The protein resides in the secreted. It localises to the cell surface. The protein localises to the cell wall. The enzyme catalyses (2R)-2-phosphoglycerate = phosphoenolpyruvate + H2O. Its pathway is carbohydrate degradation; glycolysis; pyruvate from D-glyceraldehyde 3-phosphate: step 4/5. Its function is as follows. Catalyzes the reversible conversion of 2-phosphoglycerate (2-PG) into phosphoenolpyruvate (PEP). It is essential for the degradation of carbohydrates via glycolysis. This Streptococcus pneumoniae serotype 2 (strain D39 / NCTC 7466) protein is Enolase.